The primary structure comprises 210 residues: Synaptosomal-associated protein 23 (210 aa).

Met-1 is modified (N-acetylmethionine). Residues Ser-5, Ser-20, Ser-23, and Ser-34 each carry the phosphoserine modification. The region spanning 14 to 76 (HQVTDESLES…REAEKTLTEL (63 aa)) is the t-SNARE coiled-coil homology 1 domain. A coiled-coil region spans residues 23 to 76 (STRRILGLAIESQDAGIKTITMLDEQGEQLNRIEEGMDQINKDMREAEKTLTEL). S-palmitoyl cysteine attachment occurs at residues Cys-79, Cys-80, Cys-83, Cys-85, and Cys-87. Positions 104-135 (GDGGDNSPSNVVSKQPSRITNGQPQQTTGAAS) are disordered. Polar residues predominate over residues 109–133 (NSPSNVVSKQPSRITNGQPQQTTGA). Ser-110 and Ser-160 each carry phosphoserine. Residues 145-207 (DAREDEMEEN…DIANTRAKKL (63 aa)) enclose the t-SNARE coiled-coil homology 2 domain.

It belongs to the SNAP-25 family. As to quaternary structure, homotetramer (via coiled-coil domain), also forms heterotetramers with STX4 and VAMP3. Found in a complex with VAMP8 and STX1A. Found in a complex with VAMP8 and STX4 in pancreas. Interacts simultaneously with SNAPIN and SYN4. Interacts with STX1A. Interacts with STX12. Interacts tightly to multiple syntaxins and synaptobrevins/VAMPs. Interacts with ZDHHC13 (via ANK repeats). Interacts with ZDHHC17 (via ANK repeats). In terms of processing, (Microbial infection) Targeted and hydrolyzed by C.botulinum neurotoxin type A (BoNT/A, botA) which hydrolyzes the 202-Thr-|-Arg-203 bond; the in vitro reaction is not highly efficient. (Microbial infection) Targeted and hydrolyzed by C.botulinum neurotoxin type E (BoNT/E) which hydrolyzes the 185-Arg-|-Ile-186 bond; the in vitro reaction is more efficient than that of BoNT/A. In terms of tissue distribution, expressed in non-neuronal tissues.

The protein localises to the cell membrane. It is found in the synapse. Its subcellular location is the synaptosome. Essential component of the high affinity receptor for the general membrane fusion machinery and an important regulator of transport vesicle docking and fusion. The sequence is that of Synaptosomal-associated protein 23 (Snap23) from Mus musculus (Mouse).